The chain runs to 158 residues: NAD(P)H-quinone oxidoreductase subunit J, chloroplastic (158 aa).

Belongs to the complex I 30 kDa subunit family. In terms of assembly, NDH is composed of at least 16 different subunits, 5 of which are encoded in the nucleus.

The protein localises to the plastid. It is found in the chloroplast thylakoid membrane. It catalyses the reaction a plastoquinone + NADH + (n+1) H(+)(in) = a plastoquinol + NAD(+) + n H(+)(out). The enzyme catalyses a plastoquinone + NADPH + (n+1) H(+)(in) = a plastoquinol + NADP(+) + n H(+)(out). In terms of biological role, NDH shuttles electrons from NAD(P)H:plastoquinone, via FMN and iron-sulfur (Fe-S) centers, to quinones in the photosynthetic chain and possibly in a chloroplast respiratory chain. The immediate electron acceptor for the enzyme in this species is believed to be plastoquinone. Couples the redox reaction to proton translocation, and thus conserves the redox energy in a proton gradient. The sequence is that of NAD(P)H-quinone oxidoreductase subunit J, chloroplastic from Aethionema cordifolium (Lebanon stonecress).